We begin with the raw amino-acid sequence, 283 residues long: ATP phosphoribosyltransferase (283 aa).

The protein belongs to the ATP phosphoribosyltransferase family. Long subfamily. It depends on Mg(2+) as a cofactor.

The protein localises to the cytoplasm. The enzyme catalyses 1-(5-phospho-beta-D-ribosyl)-ATP + diphosphate = 5-phospho-alpha-D-ribose 1-diphosphate + ATP. The protein operates within amino-acid biosynthesis; L-histidine biosynthesis; L-histidine from 5-phospho-alpha-D-ribose 1-diphosphate: step 1/9. Its activity is regulated as follows. Feedback inhibited by histidine. Catalyzes the condensation of ATP and 5-phosphoribose 1-diphosphate to form N'-(5'-phosphoribosyl)-ATP (PR-ATP). Has a crucial role in the pathway because the rate of histidine biosynthesis seems to be controlled primarily by regulation of HisG enzymatic activity. This is ATP phosphoribosyltransferase from Bacteroides fragilis (strain ATCC 25285 / DSM 2151 / CCUG 4856 / JCM 11019 / LMG 10263 / NCTC 9343 / Onslow / VPI 2553 / EN-2).